The following is a 328-amino-acid chain: 3-dehydroquinate synthase (328 aa).

The protein belongs to the archaeal-type DHQ synthase family.

It carries out the reaction 2-amino-2,3,7-trideoxy-D-lyxo-hept-6-ulosonate + NAD(+) + H2O = 3-dehydroquinate + NH4(+) + NADH + H(+). In terms of biological role, catalyzes the oxidative deamination and cyclization of 2-amino-3,7-dideoxy-D-threo-hept-6-ulosonic acid (ADH) to yield 3-dehydroquinate (DHQ), which is fed into the canonical shikimic pathway of aromatic amino acid biosynthesis. The chain is 3-dehydroquinate synthase from Methanoculleus marisnigri (strain ATCC 35101 / DSM 1498 / JR1).